A 261-amino-acid chain; its full sequence is Guanine nucleotide exchange factor BopE (261 aa).

This sequence belongs to the GEF (guanine exchange factor) SopE family. In terms of assembly, monomer. Interacts with human CDC42.

The protein localises to the secreted. Functionally, activator for both CDC42 and RAC1 by directly interacting with these Rho GTPases and acting as a guanine nucleotide exchange factor (GEF). This activation results in actin cytoskeleton rearrangements and stimulates membrane ruffling, thus promoting bacterial entry into non-phagocytic cells. The protein is Guanine nucleotide exchange factor BopE (bopE) of Burkholderia pseudomallei (strain 1710b).